Consider the following 247-residue polypeptide: ATP synthase subunit a, chloroplastic (247 aa).

A run of 5 helical transmembrane segments spans residues 38 to 58, 95 to 115, 134 to 154, 199 to 219, and 220 to 240; these read QVLI…ILII, VPFI…GALL, INTT…AGLS, LVVV…VMFL, and GLFT…AYIG.

It belongs to the ATPase A chain family. F-type ATPases have 2 components, CF(1) - the catalytic core - and CF(0) - the membrane proton channel. CF(1) has five subunits: alpha(3), beta(3), gamma(1), delta(1), epsilon(1). CF(0) has four main subunits: a, b, b' and c.

The protein resides in the plastid. It is found in the chloroplast thylakoid membrane. In terms of biological role, key component of the proton channel; it plays a direct role in the translocation of protons across the membrane. The chain is ATP synthase subunit a, chloroplastic from Glycine max (Soybean).